Here is a 465-residue protein sequence, read N- to C-terminus: Argininosuccinate lyase (465 aa).

The protein belongs to the lyase 1 family. Argininosuccinate lyase subfamily.

It is found in the cytoplasm. It catalyses the reaction 2-(N(omega)-L-arginino)succinate = fumarate + L-arginine. It participates in amino-acid biosynthesis; L-arginine biosynthesis; L-arginine from L-ornithine and carbamoyl phosphate: step 3/3. The chain is Argininosuccinate lyase from Clostridium botulinum (strain Eklund 17B / Type B).